The sequence spans 149 residues: D-aminoacyl-tRNA deacylase (149 aa).

Residues 137-138 (GP) carry the Gly-cisPro motif, important for rejection of L-amino acids motif.

The protein belongs to the DTD family. Homodimer.

It is found in the cytoplasm. The catalysed reaction is glycyl-tRNA(Ala) + H2O = tRNA(Ala) + glycine + H(+). It catalyses the reaction a D-aminoacyl-tRNA + H2O = a tRNA + a D-alpha-amino acid + H(+). Functionally, an aminoacyl-tRNA editing enzyme that deacylates mischarged D-aminoacyl-tRNAs. Also deacylates mischarged glycyl-tRNA(Ala), protecting cells against glycine mischarging by AlaRS. Acts via tRNA-based rather than protein-based catalysis; rejects L-amino acids rather than detecting D-amino acids in the active site. By recycling D-aminoacyl-tRNA to D-amino acids and free tRNA molecules, this enzyme counteracts the toxicity associated with the formation of D-aminoacyl-tRNA entities in vivo and helps enforce protein L-homochirality. The protein is D-aminoacyl-tRNA deacylase of Clostridium botulinum (strain Alaska E43 / Type E3).